Reading from the N-terminus, the 561-residue chain is SH3 domain-binding protein 2 (561 aa).

In terms of domain architecture, PH spans 26-130; sequence GVAKAGYLHK…WMALLRREIG (105 aa). 2 disordered regions span residues 160 to 316 and 333 to 451; these read VDIS…GACS and KLKS…YEKV. Positions 170–188 are enriched in acidic residues; that stretch reads DNEDYEHDDEDDSYLEPDS. A phosphotyrosine; by SYK mark is found at tyrosine 174 and tyrosine 183. The short motif at 201 to 210 is the SH3-binding element; the sequence is PPAYPPPPVP. Composition is skewed to pro residues over residues 202-213 and 233-242; these read PAYPPPPVPTPR and PLLPPPPPKH. Over residues 252–266 the composition is skewed to basic and acidic residues; that stretch reads EDSKRDPLCPRRAEP. Serine 278 bears the Phosphoserine mark. Residues 342 to 354 are compositionally biased toward pro residues; the sequence is RGPPTSEPPPVPA. A phosphoserine mark is found at serine 416 and serine 427. Tyrosine 448 is modified (phosphotyrosine; by SYK). The 99-residue stretch at 457-555 folds into the SH2 domain; that stretch reads VFVNTTESCE…HQSLLLRHPY (99 aa).

Phosphorylated. Phosphorylation at Tyr-448 may stimulate the activity of the LYN kinase. As to expression, expressed in a variety of tissues including lung, liver, skeletal muscle, kidney and pancreas.

Binds differentially to the SH3 domains of certain proteins of signal transduction pathways. Binds to phosphatidylinositols; linking the hemopoietic tyrosine kinase fes to the cytoplasmic membrane in a phosphorylation dependent mechanism. This is SH3 domain-binding protein 2 (SH3BP2) from Homo sapiens (Human).